The following is a 125-amino-acid chain: MITIDFQKMGGLIPAIIQDHATNEVLMVAFMDEKTLNLTLESGKTWFFSRSRNKYWMKGEESGNTQEVVEVLTDCDADAVVIKVKQNGPAACHTGNRSCFYVRWEDGQWVEHSEPLFDPAEVYKK.

Asp74 serves as a coordination point for Mg(2+). Residue Cys75 participates in Zn(2+) binding. Mg(2+)-binding residues include Asp76 and Asp78. 2 residues coordinate Zn(2+): Cys92 and Cys99.

It belongs to the PRA-CH family. In terms of assembly, homodimer. Mg(2+) serves as cofactor. It depends on Zn(2+) as a cofactor.

The protein localises to the cytoplasm. It carries out the reaction 1-(5-phospho-beta-D-ribosyl)-5'-AMP + H2O = 1-(5-phospho-beta-D-ribosyl)-5-[(5-phospho-beta-D-ribosylamino)methylideneamino]imidazole-4-carboxamide. It functions in the pathway amino-acid biosynthesis; L-histidine biosynthesis; L-histidine from 5-phospho-alpha-D-ribose 1-diphosphate: step 3/9. Its function is as follows. Catalyzes the hydrolysis of the adenine ring of phosphoribosyl-AMP. The protein is Phosphoribosyl-AMP cyclohydrolase of Geobacter sulfurreducens (strain ATCC 51573 / DSM 12127 / PCA).